We begin with the raw amino-acid sequence, 481 residues long: Glutamate--tRNA ligase 1 (481 aa).

The 'HIGH' region motif lies at 11–21 (PSPTGSLHIGG). The 'KMSKS' region signature appears at 244–248 (KLSKR). Lysine 247 contacts ATP.

It belongs to the class-I aminoacyl-tRNA synthetase family. Glutamate--tRNA ligase type 1 subfamily. Monomer.

Its subcellular location is the cytoplasm. The enzyme catalyses tRNA(Glu) + L-glutamate + ATP = L-glutamyl-tRNA(Glu) + AMP + diphosphate. Its function is as follows. Catalyzes the attachment of glutamate to tRNA(Glu) in a two-step reaction: glutamate is first activated by ATP to form Glu-AMP and then transferred to the acceptor end of tRNA(Glu). The polypeptide is Glutamate--tRNA ligase 1 (Caldanaerobacter subterraneus subsp. tengcongensis (strain DSM 15242 / JCM 11007 / NBRC 100824 / MB4) (Thermoanaerobacter tengcongensis)).